Reading from the N-terminus, the 229-residue chain is MSTSEAGAAATVIPIDDVARDHGKAPAVATAPPPPAAAAAVPAAATTTAPRKTGVPFFRRADRGSRCVALLDFVLRVAAFGPALAAAIATGTSDETLSVFTQFFQFHARFDDFPALLFFMVANAIAAGYLVLSLPFSAVIVLRPQAIGLRHLLLVCDMIIAALLTAAAAAAAAIVDLAHSGNLRANWVPICMQFHGFCQRTSGAVVGSFLAVLVLLFLVILAAFAIRKR.

The Cytoplasmic segment spans residues 1-67; the sequence is MSTSEAGAAA…FRRADRGSRC (67 aa). Residues 68–88 form a helical membrane-spanning segment; it reads VALLDFVLRVAAFGPALAAAI. Over 89 to 115 the chain is Extracellular; the sequence is ATGTSDETLSVFTQFFQFHARFDDFPA. Residues 116-136 traverse the membrane as a helical segment; that stretch reads LLFFMVANAIAAGYLVLSLPF. Residues 137 to 157 lie on the Cytoplasmic side of the membrane; it reads SAVIVLRPQAIGLRHLLLVCD. A helical membrane pass occupies residues 158-178; that stretch reads MIIAALLTAAAAAAAAIVDLA. Topologically, residues 179 to 205 are extracellular; that stretch reads HSGNLRANWVPICMQFHGFCQRTSGAV. A helical membrane pass occupies residues 206–226; sequence VGSFLAVLVLLFLVILAAFAI. The Cytoplasmic portion of the chain corresponds to 227 to 229; it reads RKR.

Belongs to the Casparian strip membrane proteins (CASP) family. In terms of assembly, homodimer and heterodimers.

The protein resides in the cell membrane. Functionally, regulates membrane-cell wall junctions and localized cell wall deposition. Required for establishment of the Casparian strip membrane domain (CSD) and the subsequent formation of Casparian strips, a cell wall modification of the root endodermis that determines an apoplastic barrier between the intraorganismal apoplasm and the extraorganismal apoplasm and prevents lateral diffusion. This Sorghum bicolor (Sorghum) protein is Casparian strip membrane protein 1.